Here is a 309-residue protein sequence, read N- to C-terminus: Probable nitrogen assimilation transcriptional activator (309 aa).

One can recognise an HTH lysR-type domain in the interval 1–57; it reads MRLEQLQAALRVAETGSFQEAAQKVGCNQSTISRQVKGLEDELGIALFRRQGRMKLT. The H-T-H motif DNA-binding region spans 18–37; the sequence is FQEAAQKVGCNQSTISRQVK.

This sequence belongs to the LysR transcriptional regulatory family.

In terms of biological role, seems to regulate utilization of fixed nitrogen by controlling the expression of a certain gene(s) involved in nitrogen metabolism. The polypeptide is Probable nitrogen assimilation transcriptional activator (ntcB) (Synechococcus elongatus (strain ATCC 33912 / PCC 7942 / FACHB-805) (Anacystis nidulans R2)).